The sequence spans 734 residues: MAASPGPAGVGGAGAVYGSGSSGFALDSGLEIKTRSVEQTLLPLVSQITTLINHKDNTKKSDKTLQAIQRVGQAVNLAVGRFVKVGEAIANENWDLKEEINIACIEAKQAGETIAALTDITNLNHLESDGQITIFTDKTGVIKAARLLLSSVTKVLLLADRVVIKQIITSRNKVLATMERLEKVNSFQEFVQIFSQFGNEMVEFAHLSGDRQNDLKDEKKKAKMAAARAVLEKCTMMLLTASKTCLRHPNCESAHKNKEGVFDRMKVALDKVIEIVTDCKPNGETDISSISIFTGIKEFKMNIEALRENLYFQSKENLSVTLEVILERMEDFTDSAYTSHEHRERILELSTQARMELQQLISVWIQAQSKKTKSIAEELELSILKISHSLNELKKELHSTATQLAADLLKYHADHVVLKALKLTGVEGNLEALAEYACKLSEQKEQLVETCRLLRHISGTEPLEITCIHAEETFQVTGQQIISAAETLTLHPSSKIAKENLDVFCEAWESQISDMSTLLREINDVFEGRRGEKYGYLSLPKPMKNNANLKSLKPDKPDSEEQAKIAKLGLKLGLLTSDADCEIEKWEDQENEIVQYGRNMSSMAYSLYLFTRGEGPLKTSQDLIHQLEVFAAEGLKLTSSVQAFSKQLKDDDKLMLLLEINKLIPLCHQLQTVTKTSLQNKVFLKVDKCITKTRSMMALLVQLLSLCYKLLKKLQMENNGWVSVTNKDTMDSKT.

2 positions are modified to phosphoserine: serine 374 and serine 538.

Belongs to the vinculin/alpha-catenin family. As to quaternary structure, interacts with ARHGEF1. Interacts with DTNA. The interaction is required for correct localization of both CTNL1 and DTNA. As to expression, widely expressed. Expressed at lower level in neural tissues and at the highest level in the adrenal gland.

It is found in the cytoplasm. It localises to the cytoskeleton. The protein localises to the cell membrane. In terms of biological role, may modulate the Rho pathway signaling by providing a scaffold for the Lbc Rho guanine nucleotide exchange factor (ARHGEF1). The protein is Alpha-catulin (CTNNAL1) of Homo sapiens (Human).